The primary structure comprises 457 residues: Cysteine--tRNA ligase (457 aa).

Cys-27 is a binding site for Zn(2+). Positions 29–39 (ITPQSEPHIGH) match the 'HIGH' region motif. The Zn(2+) site is built by Cys-207, His-232, and Glu-236. Residues 265–269 (KMSKS) carry the 'KMSKS' region motif. Lys-268 is a binding site for ATP.

This sequence belongs to the class-I aminoacyl-tRNA synthetase family. As to quaternary structure, monomer. The cofactor is Zn(2+).

The protein resides in the cytoplasm. It catalyses the reaction tRNA(Cys) + L-cysteine + ATP = L-cysteinyl-tRNA(Cys) + AMP + diphosphate. This chain is Cysteine--tRNA ligase, found in Dehalococcoides mccartyi (strain ATCC BAA-2100 / JCM 16839 / KCTC 5957 / BAV1).